We begin with the raw amino-acid sequence, 143 residues long: Large ribosomal subunit protein uL11 (143 aa).

Belongs to the universal ribosomal protein uL11 family. Part of the ribosomal stalk of the 50S ribosomal subunit. Interacts with L10 and the large rRNA to form the base of the stalk. L10 forms an elongated spine to which L12 dimers bind in a sequential fashion forming a multimeric L10(L12)X complex. In terms of processing, one or more lysine residues are methylated.

In terms of biological role, forms part of the ribosomal stalk which helps the ribosome interact with GTP-bound translation factors. The polypeptide is Large ribosomal subunit protein uL11 (Burkholderia ambifaria (strain MC40-6)).